Here is a 481-residue protein sequence, read N- to C-terminus: Small ribosomal subunit protein bS1 (481 aa).

S1 motif domains follow at residues 36-105, 123-188, 209-277, and 294-363; these read GDIV…LSKK, DEAV…LSRR, GTIR…LSLK, and GQIV…LSLK. The tract at residues 429 to 467 is disordered; it reads TAQMEKFAAAEAAGRGADDQSSASSAPSEKTAGGSLASD. Low complexity predominate over residues 437–456; that stretch reads AAEAAGRGADDQSSASSAPS.

Belongs to the bacterial ribosomal protein bS1 family.

In terms of biological role, binds mRNA; thus facilitating recognition of the initiation point. It is needed to translate mRNA with a short Shine-Dalgarno (SD) purine-rich sequence. This Mycobacterium tuberculosis (strain CDC 1551 / Oshkosh) protein is Small ribosomal subunit protein bS1 (rpsA).